A 159-amino-acid chain; its full sequence is uncharacterized protein (159 aa).

The span at 1–13 (MESRPSGRQHASE) shows a compositional bias: basic and acidic residues. The disordered stretch occupies residues 1–35 (MESRPSGRQHASEGDGDQSPTQCAGMRSSGRSDQP).

This is an uncharacterized protein from Homo sapiens (Human).